Reading from the N-terminus, the 407-residue chain is Aspartate aminotransferase, cytoplasmic (407 aa).

L-aspartate is bound by residues glycine 39, tryptophan 136, and asparagine 189. Residue lysine 253 is modified to N6-(pyridoxal phosphate)lysine. Arginine 381 serves as a coordination point for L-aspartate.

It belongs to the class-I pyridoxal-phosphate-dependent aminotransferase family. As to quaternary structure, homodimer. It depends on pyridoxal 5'-phosphate as a cofactor.

The protein localises to the cytoplasm. It catalyses the reaction L-aspartate + 2-oxoglutarate = oxaloacetate + L-glutamate. Important for the metabolism of amino acids and Krebs-cycle related organic acids. In plants, it is involved in nitrogen metabolism and in aspects of carbon and energy metabolism. This is Aspartate aminotransferase, cytoplasmic from Oryza sativa subsp. japonica (Rice).